Here is a 364-residue protein sequence, read N- to C-terminus: Chorismate synthase (364 aa).

The tract at residues 41 to 60 (MQHDLDRRRPGTSRYTTARR) is disordered. Residues R48 and R54 each coordinate NADP(+). FMN contacts are provided by residues 125-127 (RSS), 238-239 (NA), G278, 293-297 (KPTSS), and R319.

It belongs to the chorismate synthase family. As to quaternary structure, homotetramer. FMNH2 serves as cofactor.

It catalyses the reaction 5-O-(1-carboxyvinyl)-3-phosphoshikimate = chorismate + phosphate. It functions in the pathway metabolic intermediate biosynthesis; chorismate biosynthesis; chorismate from D-erythrose 4-phosphate and phosphoenolpyruvate: step 7/7. Functionally, catalyzes the anti-1,4-elimination of the C-3 phosphate and the C-6 proR hydrogen from 5-enolpyruvylshikimate-3-phosphate (EPSP) to yield chorismate, which is the branch point compound that serves as the starting substrate for the three terminal pathways of aromatic amino acid biosynthesis. This reaction introduces a second double bond into the aromatic ring system. In Shewanella sp. (strain ANA-3), this protein is Chorismate synthase.